The sequence spans 134 residues: MPPKSRQGAGRKVRRKEKKNVVHGHAHIKSTFNNTIVSITDPTGAVISWASAGQVGFKGSRKSTPFAAQMAAEAAARRAQEHGVRKVDVFVKGPGSGRETAIRSLQATGLEVGSIQDVTPVPHNGCRPPKRRRV.

Positions 1–21 are disordered; that stretch reads MPPKSRQGAGRKVRRKEKKNV. Over residues 9-21 the composition is skewed to basic residues; that stretch reads AGRKVRRKEKKNV.

It belongs to the universal ribosomal protein uS11 family. Part of the 30S ribosomal subunit. Interacts with proteins S7 and S18. Binds to IF-3.

Its function is as follows. Located on the platform of the 30S subunit, it bridges several disparate RNA helices of the 16S rRNA. Forms part of the Shine-Dalgarno cleft in the 70S ribosome. The protein is Small ribosomal subunit protein uS11 of Thermobifida fusca (strain YX).